The following is a 3938-amino-acid chain: Protein bassoon (3938 aa).

Residues 1–158 (MGNEASLEGG…PTSPYSVPQI (158 aa)) form a disordered region. A lipid anchor (N-myristoyl glycine) is attached at Gly-2. A compositionally biased stretch (gly residues) spans 9-29 (GGAGEGPLPPGGSGLGPGPGA). Positions 31-61 (KPPSALAGGGQLPVAGAARAAGPPTPGLGLV) are enriched in low complexity. The segment at 62-70 (PGPGPGPGP) is 4 X 2 AA tandem repeats of P-G. Polar residues-rich tracts occupy residues 86 to 98 (QRAT…QASA) and 127 to 154 (QVDS…SPYS). Ser-142 carries the post-translational modification Phosphoserine. Omega-N-methylarginine is present on Arg-145. C4-type zinc fingers lie at residues 167 to 190 (CPIC…CTQC) and 195 to 217 (CNQC…CLNC). Disordered stretches follow at residues 228 to 346 (TTAP…LTGK) and 361 to 456 (LMSV…KTMP). Residues 230-240 (APRSKSQQQLH) are compositionally biased toward polar residues. Phosphoserine occurs at positions 241 and 245. A compositionally biased stretch (polar residues) spans 361–376 (LMSVQPEADTQGQPSP). Residues 394 to 406 (PRPPGSGPGPGPT) are compositionally biased toward pro residues. C4-type zinc fingers lie at residues 462-485 (CPLC…CTAC) and 490-512 (CTLC…CLNC). Disordered stretches follow at residues 523–921 (GEPA…LQGG), 934–1247 (GRLW…TPAG), 1294–1541 (MDPM…WQQS), and 1561–1611 (RMVH…RAPS). Over residues 526–539 (APLPLPTPQEPPAG) the composition is skewed to pro residues. A compositionally biased stretch (low complexity) spans 548-589 (SPLKQKGPQGPGQPSGSLPPKASPQAAKASPQAAKASPQAKP). Repeat copies occupy residues 568–574 (KASPQAA), 575–581 (KASPQAA), and 582–588 (KASPQAK). The segment at 568 to 588 (KASPQAAKASPQAAKASPQAK) is 3 X 7 AA tandem repeats of K-A-S-P-Q-A-[AK]. The segment covering 616–629 (VPKPPPETAVPPGT) has biased composition (pro residues). Over residues 668-677 (QDLSRSPQSL) the composition is skewed to polar residues. A compositionally biased stretch (low complexity) spans 678-692 (SDTGYSSDGVSSSQS). Residues 693–702 (EITGVVQQEV) show a composition bias toward polar residues. Composition is skewed to acidic residues over residues 769–784 (FDSD…EDDS) and 847–858 (SAEEDNLEEDDT). Omega-N-methylarginine is present on Arg-863. At Ser-965 the chain carries Phosphoserine. Residues 979 to 996 (PASTPSYTSGTSPTSLSS) show a composition bias toward low complexity. Residues 1032–1087 (IEDSSEEEELREEEELLREQEKMREVEQQRIRSTARKTRRDKEELRAQRRRERSKT) adopt a coiled-coil conformation. Acidic residues predominate over residues 1034–1047 (DSSEEEELREEEEL). Phosphoserine occurs at positions 1035 and 1036. Residues 1048-1061 (LREQEKMREVEQQR) show a composition bias toward basic and acidic residues. Ser-1085 bears the Phosphoserine mark. Thr-1087 is modified (phosphothreonine). 2 positions are modified to phosphoserine: Ser-1093 and Ser-1099. Basic and acidic residues predominate over residues 1102 to 1117 (EELRQAAEMEELHRSS). Low complexity-rich tracts occupy residues 1118 to 1128 (CSEYSPSPSLD) and 1158 to 1175 (SPTE…SGRP). A coiled-coil region spans residues 1176–1203 (LKSAEEAYEDMMRKAELLQRQQGQAAGA). Basic and acidic residues predominate over residues 1177 to 1192 (KSAEEAYEDMMRKAEL). The span at 1194–1204 (QRQQGQAAGAR) shows a compositional bias: low complexity. The span at 1211–1224 (SQPTGPRSQGSFEY) shows a compositional bias: polar residues. Ser-1221 is subject to Phosphoserine. Residues 1318-1328 (SFPTSTSSDSS) show a composition bias toward low complexity. O-linked (GlcNAc) threonine glycosylation is present at Thr-1339. The span at 1342–1351 (FAKEPQEPLK) shows a compositional bias: basic and acidic residues. Low complexity-rich tracts occupy residues 1352-1364 (LHSS…LASK) and 1374-1386 (PGTP…APCP). Thr-1380 carries an O-linked (GlcNAc) threonine glycan. Positions 1402-1426 (SPSTSSTIHSYGQPPTTANYGSQTE) are enriched in polar residues. Phosphoserine is present on residues Ser-1470, Ser-1479, and Ser-1481. Residues 1476 to 1487 (STPSESPTFSPS) are compositionally biased toward low complexity. 2 stretches are compositionally biased toward polar residues: residues 1496–1510 (EFST…SSDI) and 1561–1597 (RMVH…SQMP). Residues Arg-1780 and Arg-1784 each carry the omega-N-methylarginine modification. Arg-1794 carries the asymmetric dimethylarginine; alternate modification. The residue at position 1794 (Arg-1794) is an Omega-N-methylarginine; alternate. Omega-N-methylarginine is present on Arg-1806. A disordered region spans residues 1914–1964 (PSAPDKSVTDAALPGQSSGPFYSPRDPEPPEPLTFRAQGVVGPGPHEEQRP). A glycan (O-linked (GlcNAc) threonine) is linked at Thr-1922. Phosphoserine occurs at positions 1978 and 2034. 2 positions are modified to omega-N-methylarginine: Arg-2039 and Arg-2069. Asymmetric dimethylarginine occurs at positions 2243, 2253, and 2259. Residues 2280–2305 (AAKASGAGGPPRPELPAGGAREEPLS) form a disordered region. O-linked (GlcNAc) threonine glycosylation is present at Thr-2307. Disordered stretches follow at residues 2318–2343 (VAQA…SGVL) and 2461–2486 (EEQK…PPAA). A coiled-coil region spans residues 2345-2470 (RPVMEKEEAS…EEQKQRQKAP (126 aa)). Thr-2510 is a glycosylation site (O-linked (GlcNAc) threonine). A disordered region spans residues 2513 to 2648 (PGQAREPVLH…HEASASSSAA (136 aa)). Over residues 2527–2537 (SSASDMSLQTE) the composition is skewed to polar residues. Residue Ser-2564 is modified to Phosphoserine. 2 positions are modified to phosphothreonine: Thr-2581 and Thr-2608. Residues 2629-2641 (RHSDSGSDSKHEA) show a composition bias toward basic and acidic residues. Thr-2685 carries O-linked (GlcNAc) threonine glycosylation. The tract at residues 2715 to 3263 (EPDGQAQGVA…GGVSGRPGKD (549 aa)) is interaction with DAO. 3 positions are modified to phosphoserine: Ser-2796, Ser-2845, and Ser-2851. The interval 2839–2859 (TLQRSLSDPKPLSPTAEESAK) is disordered. An O-linked (GlcNAc) threonine glycan is attached at Thr-2930. Positions 2933–2975 (SLLRELDRDLRLVEHESTKLRKKQAELDEEEKEIDAKLKYLEL) form a coiled coil. The tract at residues 2934 to 2996 (LLRELDRDLR…DRVGRDYPPL (63 aa)) is sufficient for binding to ERC2. Ser-3007 is modified (phosphoserine). The span at 3055 to 3068 (TQYTAGSSGPTQNG) shows a compositional bias: polar residues. Disordered stretches follow at residues 3055–3148 (TQYT…ADLE), 3162–3399 (AVTV…SRKF), 3414–3546 (QQRY…PRAH), and 3569–3910 (YHLG…VFSK). Positions 3184–3196 (EHGKAPEHPRGGD) are enriched in basic and acidic residues. The segment covering 3198 to 3222 (SSVSQSPAPTYPSDSHYTSLEQNVP) has biased composition (polar residues). Ser-3286 carries the post-translational modification Phosphoserine. Residues 3304 to 3315 (ESNGRPASTHYY) show a composition bias toward polar residues. 3 stretches are compositionally biased toward basic and acidic residues: residues 3316-3328 (SDSD…RADK), 3358-3377 (QGME…KDVE), and 3450-3469 (LSSH…RETA). Ser-3368 carries the phosphoserine modification. Arg-3488 is modified (omega-N-methylarginine). Over residues 3506–3520 (PLGRPRPAGGALPPG) the composition is skewed to low complexity. Composition is skewed to basic and acidic residues over residues 3535 to 3546 (VQEHVKDGPRAH) and 3578 to 3588 (WFDKPRDARSD). Basic residues predominate over residues 3638–3651 (EHRHHGDHGRHSGR). The segment covering 3652–3676 (HAGEEPGRRAARPHARDMGRHETRP) has biased composition (basic and acidic residues). The span at 3751–3820 (PQQSQPPSSR…ARLQQQSQPT (70 aa)) shows a compositional bias: low complexity. The stretch at 3772–3803 (QTQQQQQQQQQQQQQQQQQQQQQQQQGLGQQA) forms a coiled coil. Arg-3822 carries the omega-N-methylarginine modification. Residues 3834 to 3848 (KPQPGPTTAPGPQPA) are compositionally biased toward pro residues. Composition is skewed to low complexity over residues 3860–3887 (KPAA…KTGA) and 3894–3904 (GAPAGQPAAEG).

Interacts with PCLO, ERC2/CAST1, RIMS1 and UNC13A. Interacts with TPRG1L. Interacts with DYNLL1 and DYNLL2; these interactions potentially link PTVs to dynein and myosin V motor complexes. Interacts with ATG5; this interaction is important for the regulation of presynaptic autophagy. Interacts (via C-terminus) with TRIO (via N-terminus). Interacts with CTBP1. Interacts with SIAH1; this interaction negatively regulates SIAH1 E3 ligase activity. Interacts (via coiled region) with DAO; the interaction is direct. In terms of processing, myristoylated. The N-terminal myristoylation is not sufficient for presynaptic localization. As to expression, detected at synapses in the stratum lucidum in the hippocampus CA3 region (at protein level).

It is found in the cytoplasm. The protein resides in the presynaptic active zone. Its subcellular location is the cytoskeleton. It localises to the cytoplasmic vesicle. The protein localises to the secretory vesicle. It is found in the synaptic vesicle membrane. Its function is as follows. Scaffold protein of the presynaptic cytomatrix at the active zone (CAZ) which is the place in the synapse where neurotransmitter is released. After synthesis, participates in the formation of Golgi-derived membranous organelles termed Piccolo-Bassoon transport vesicles (PTVs) that are transported along axons to sites of nascent synaptic contacts. At the presynaptic active zone, regulates the spatial organization of synaptic vesicle cluster, the protein complexes that execute membrane fusion and compensatory endocytosis. Also functions in processes other than assembly such as the regulation of specific presynaptic protein ubiquitination by interacting with SIAH1 or the regulation of presynaptic autophagy by associating with ATG5. Also mediates synapse to nucleus communication leading to reconfiguration of gene expression by associating with the transcriptional corepressor CTBP1 and by subsequently reducing the size of its pool available for nuclear import. Inhibits the activity of the proportion of DAO enzyme that localizes to the presynaptic active zone, which may modulate synaptic transmission. The sequence is that of Protein bassoon from Rattus norvegicus (Rat).